A 287-amino-acid polypeptide reads, in one-letter code: BURP domain-containing protein 2 (287 aa).

The first 21 residues, 1–21, serve as a signal peptide directing secretion; the sequence is MARSLAALLLLLVAAAGASHA. Residues 67–287 enclose the BURP domain; sequence FFLEKDLFPG…PQDDMLWVRN (221 aa).

Expressed in shoot.

In Oryza sativa subsp. japonica (Rice), this protein is BURP domain-containing protein 2 (BURP2).